The primary structure comprises 324 residues: Heat-inducible transcription repressor HrcA (324 aa).

The protein belongs to the HrcA family.

Its function is as follows. Negative regulator of class I heat shock genes (grpE-dnaK-dnaJ and groELS operons). Prevents heat-shock induction of these operons. The protein is Heat-inducible transcription repressor HrcA of Synechococcus sp. (strain CC9902).